A 213-amino-acid chain; its full sequence is Pyridoxine/pyridoxamine 5'-phosphate oxidase (213 aa).

Residues 60–65 (RMVLMK), 75–76 (YS), lysine 82, and glutamine 104 each bind FMN. Lysine 65 lines the substrate pocket. Substrate-binding residues include tyrosine 122 and arginine 126. Residues 139 to 140 (QS) and tryptophan 184 each bind FMN. Residue 190 to 192 (RLH) coordinates substrate. Arginine 194 serves as a coordination point for FMN.

Belongs to the pyridoxamine 5'-phosphate oxidase family. In terms of assembly, homodimer. FMN is required as a cofactor.

The catalysed reaction is pyridoxamine 5'-phosphate + O2 + H2O = pyridoxal 5'-phosphate + H2O2 + NH4(+). It carries out the reaction pyridoxine 5'-phosphate + O2 = pyridoxal 5'-phosphate + H2O2. The protein operates within cofactor metabolism; pyridoxal 5'-phosphate salvage; pyridoxal 5'-phosphate from pyridoxamine 5'-phosphate: step 1/1. It functions in the pathway cofactor metabolism; pyridoxal 5'-phosphate salvage; pyridoxal 5'-phosphate from pyridoxine 5'-phosphate: step 1/1. Catalyzes the oxidation of either pyridoxine 5'-phosphate (PNP) or pyridoxamine 5'-phosphate (PMP) into pyridoxal 5'-phosphate (PLP). This Nitrobacter hamburgensis (strain DSM 10229 / NCIMB 13809 / X14) protein is Pyridoxine/pyridoxamine 5'-phosphate oxidase.